Reading from the N-terminus, the 142-residue chain is MYNKKYVIPLILVFLIGFFTPYWYNAMAGTLGHVPTLKEPAGNCVEDKDWMAANHMLLLQQWRTQAIRHGAEGGGIYHSFTTGEEYHASTNTCWSCHDSKEEFCDQCHDYVGIHPECWDCHYTPSVEKPHYSGIEELSKYFS.

The Cytoplasmic portion of the chain corresponds to 1–6; it reads MYNKKY. The helical transmembrane segment at 7 to 27 threads the bilayer; sequence VIPLILVFLIGFFTPYWYNAM. The Extracellular segment spans residues 28 to 142; it reads AGTLGHVPTL…GIEELSKYFS (115 aa). Heme is bound by residues Cys-93, Cys-96, His-97, Cys-104, Cys-107, His-108, Cys-117, Cys-120, and His-121.

Consists of five subunits: an integral membrane subunit, a cytochrome b-like subunit, a cytochrome c subunit and two iron-sulfur subunits. In terms of processing, binds 3 heme groups per subunit.

Its subcellular location is the cell membrane. Its function is as follows. Has menaquinol-oxidizing activity. HmeA, HmeB and HmeE subunits may together catalyze electron transfer from menaquinol to cytochrome c. This chain is Hdr-like menaquinol oxidoreductase cytochrome c subunit (hmeE), found in Archaeoglobus fulgidus (strain ATCC 49558 / DSM 4304 / JCM 9628 / NBRC 100126 / VC-16).